The chain runs to 388 residues: Succinate--CoA ligase [ADP-forming] subunit beta (388 aa).

Residues 9 to 244 (KQLFAEYGLP…PSQEDSREAE (236 aa)) form the ATP-grasp domain. ATP-binding positions include Lys-46, 53–55 (GRG), Glu-99, Thr-102, and Glu-107. Residues Asn-199 and Asp-213 each contribute to the Mg(2+) site. Residues Asn-264 and 321 to 323 (GIV) contribute to the substrate site.

Belongs to the succinate/malate CoA ligase beta subunit family. In terms of assembly, heterotetramer of two alpha and two beta subunits. Mg(2+) serves as cofactor.

It catalyses the reaction succinate + ATP + CoA = succinyl-CoA + ADP + phosphate. The catalysed reaction is GTP + succinate + CoA = succinyl-CoA + GDP + phosphate. It participates in carbohydrate metabolism; tricarboxylic acid cycle; succinate from succinyl-CoA (ligase route): step 1/1. Succinyl-CoA synthetase functions in the citric acid cycle (TCA), coupling the hydrolysis of succinyl-CoA to the synthesis of either ATP or GTP and thus represents the only step of substrate-level phosphorylation in the TCA. The beta subunit provides nucleotide specificity of the enzyme and binds the substrate succinate, while the binding sites for coenzyme A and phosphate are found in the alpha subunit. The chain is Succinate--CoA ligase [ADP-forming] subunit beta from Marinobacter nauticus (strain ATCC 700491 / DSM 11845 / VT8) (Marinobacter aquaeolei).